The primary structure comprises 317 residues: Probable cell division protein WhiA (317 aa).

Residues 275 to 308 constitute a DNA-binding region (H-T-H motif); the sequence is SLKELGEMLVPKVGKSGVNHRMRKIDELAEKLEE.

This sequence belongs to the WhiA family.

Its function is as follows. Involved in cell division and chromosome segregation. The chain is Probable cell division protein WhiA from Desulfitobacterium hafniense (strain Y51).